A 742-amino-acid polypeptide reads, in one-letter code: MMTFLCTRSGRRASGVECRIAAERAYFRVRGLPVANMIGWWPRLCPVMSLALLWACSVGAGSDCKSVAIETDSRIAEQTQQRHLQALFDKYGQNGSISLEGLFNLLKGVGLDRIRKVMVHHPGNAHNHTHTHDHTHTHVDKLTAHTHPVTTKKGDMDHSVEKSDPVPKAQPDPASGKKSQSDAHHNLYMKMNQESTTALTTPSYVTRSRRTNRSADYDFTQDHASFSPSQPNVTHSNHTHHDEDTPTHQHDDHDEHEHARASLGCQNASTILQTHGMRKEASLSVKDFSFLCPALLMQIDSKSCIVHEDEDEHSDHSHHHKHHHHHHDHQHLQHPHNHTNGRGQRNTPVYIAWLGGFLSITLISLLALVGVVLIPLMNRVCFNFLLSFLVALAVGTLSGDALLHLIPHSQGHHHHGHSEEHAEEEDSLRPVWTGLTALSGVYIMFLIEHFLTLGKMYKDKNQKVQKRVDLTTEVLESEKLPSLEENDVKIEAAETNGGRALAEEEEVMLGAELYNDIDCENKCHSHFHDTVGQSDEQHHHHHDYHHILHHHHSQNHHPHTHTHRHTHSYSQQHFEQAGVATLAWMVIMGDGLHNFSDGLAIGAAFTEGLSSGLSTSVAVFCHELPHELGDFAVLLKAGMSVRQAMLYNLLSALMGYLGMIIGILIGHYAENVATWIFALTAGLFMYVALVDMVPEMLHNDASEAGFSHYGFFLLQNAGILLGFGIMLIIAVFEDRIQLDLGY.

The Extracellular portion of the chain corresponds to 1–353 (MMTFLCTRSG…QRNTPVYIAW (353 aa)). N-linked (GlcNAc...) asparagine glycosylation is found at Asn94 and Asn127. Disordered regions lie at residues 148–182 (PVTTKKGDMDHSVEKSDPVPKAQPDPASGKKSQSD) and 191–210 (MNQESTTALTTPSYVTRSRR). Basic and acidic residues predominate over residues 152–165 (KKGDMDHSVEKSDP). Residues 192–206 (NQESTTALTTPSYVT) show a composition bias toward polar residues. 3 N-linked (GlcNAc...) asparagine glycosylation sites follow: Asn212, Asn232, and Asn237. The interval 220–260 (TQDHASFSPSQPNVTHSNHTHHDEDTPTHQHDDHDEHEHAR) is disordered. A compositionally biased stretch (polar residues) spans 222-236 (DHASFSPSQPNVTHS). Positions 239–260 (THHDEDTPTHQHDDHDEHEHAR) are enriched in basic and acidic residues. Residues Asn267 and Asn337 are each glycosylated (N-linked (GlcNAc...) asparagine). Residues 310–342 (EDEHSDHSHHHKHHHHHHDHQHLQHPHNHTNGR) are disordered. The segment covering 316–339 (HSHHHKHHHHHHDHQHLQHPHNHT) has biased composition (basic residues). The helical transmembrane segment at 354–374 (LGGFLSITLISLLALVGVVLI) threads the bilayer. Over 375 to 385 (PLMNRVCFNFL) the chain is Cytoplasmic. Residues 386–406 (LSFLVALAVGTLSGDALLHLI) traverse the membrane as a helical segment. Residues 407–430 (PHSQGHHHHGHSEEHAEEEDSLRP) lie on the Extracellular side of the membrane. A helical transmembrane segment spans residues 431–451 (VWTGLTALSGVYIMFLIEHFL). Topologically, residues 452-644 (TLGKMYKDKN…LKAGMSVRQA (193 aa)) are cytoplasmic. The chain crosses the membrane as a helical span at residues 645 to 665 (MLYNLLSALMGYLGMIIGILI). Over 666-671 (GHYAEN) the chain is Extracellular. A helical transmembrane segment spans residues 672–692 (VATWIFALTAGLFMYVALVDM). Over 693–710 (VPEMLHNDASEAGFSHYG) the chain is Cytoplasmic. A helical transmembrane segment spans residues 711–731 (FFLLQNAGILLGFGIMLIIAV). Residues 732–742 (FEDRIQLDLGY) are Extracellular-facing.

It belongs to the ZIP transporter (TC 2.A.5) family. Post-translationally, cleaved on the N-terminus before locating to the plasma membrane. In terms of processing, N-glycosylated.

Its subcellular location is the cell membrane. The enzyme catalyses Zn(2+)(in) = Zn(2+)(out). In terms of biological role, acts as a zinc-influx transporter which plays a role in zinc homeostasis and in the induction of epithelial-to-mesenchymal transition (EMT). This chain is Zinc transporter ZIP6, found in Danio rerio (Zebrafish).